The following is a 934-amino-acid chain: Serine/threonine-protein kinase PknD (934 aa).

Residues 4–296 (YELIRLIGRG…ELRKALQPHL (293 aa)) form the Protein kinase domain. Residues 10-18 (IGRGGMGEV) and K33 contribute to the ATP site. D138 (proton acceptor) is an active-site residue.

It belongs to the protein kinase superfamily. Ser/Thr protein kinase family. Post-translationally, autophosphorylated on serine and threonine residues.

It carries out the reaction L-seryl-[protein] + ATP = O-phospho-L-seryl-[protein] + ADP + H(+). The catalysed reaction is L-threonyl-[protein] + ATP = O-phospho-L-threonyl-[protein] + ADP + H(+). Functionally, together with the serine/threonine kinase Pkn1, may play a role in the specific interactions with host proteins during intracellular growth. The polypeptide is Serine/threonine-protein kinase PknD (Chlamydia muridarum (strain MoPn / Nigg)).